The chain runs to 201 residues: Large ribosomal subunit protein uL4 (201 aa).

The disordered stretch occupies residues 44-71; that stretch reads RAQKTRAEVTGSGKKPWRQKGTGRARSG.

It belongs to the universal ribosomal protein uL4 family. Part of the 50S ribosomal subunit.

Its function is as follows. One of the primary rRNA binding proteins, this protein initially binds near the 5'-end of the 23S rRNA. It is important during the early stages of 50S assembly. It makes multiple contacts with different domains of the 23S rRNA in the assembled 50S subunit and ribosome. Forms part of the polypeptide exit tunnel. The protein is Large ribosomal subunit protein uL4 of Escherichia fergusonii (strain ATCC 35469 / DSM 13698 / CCUG 18766 / IAM 14443 / JCM 21226 / LMG 7866 / NBRC 102419 / NCTC 12128 / CDC 0568-73).